Consider the following 151-residue polypeptide: Transcriptional repressor NrdR (151 aa).

A zinc finger spans residues 3 to 34 (CPYCGYEETRVLDSRVDSSGMTVRRRRECVKC). In terms of domain architecture, ATP-cone spans 49 to 139 (VFVVKKDGKR…VYKDFREIDQ (91 aa)).

It belongs to the NrdR family. It depends on Zn(2+) as a cofactor.

In terms of biological role, negatively regulates transcription of bacterial ribonucleotide reductase nrd genes and operons by binding to NrdR-boxes. The protein is Transcriptional repressor NrdR of Thermosipho melanesiensis (strain DSM 12029 / CIP 104789 / BI429).